Here is a 206-residue protein sequence, read N- to C-terminus: Ribosomal RNA small subunit methyltransferase G (206 aa).

S-adenosyl-L-methionine-binding positions include glycine 74, leucine 79, valine 125–glutamate 126, and arginine 140.

The protein belongs to the methyltransferase superfamily. RNA methyltransferase RsmG family.

It is found in the cytoplasm. It catalyses the reaction guanosine(527) in 16S rRNA + S-adenosyl-L-methionine = N(7)-methylguanosine(527) in 16S rRNA + S-adenosyl-L-homocysteine. In terms of biological role, specifically methylates the N7 position of guanine in position 527 of 16S rRNA. The sequence is that of Ribosomal RNA small subunit methyltransferase G from Shewanella frigidimarina (strain NCIMB 400).